The sequence spans 30 residues: Cyclotide hyen-G (30 aa).

The segment at residues 1–30 (GLPCGESCVYIPCISTVLGCSCSNKVCYRD) is a cross-link (cyclopeptide (Gly-Asp)). 3 disulfides stabilise this stretch: cysteine 4–cysteine 20, cysteine 8–cysteine 22, and cysteine 13–cysteine 27.

This is a cyclic peptide. In terms of tissue distribution, detected in stems (at protein level).

Functionally, probably participates in a plant defense mechanism. The protein is Cyclotide hyen-G of Pigea enneasperma (Spade flower).